Reading from the N-terminus, the 373-residue chain is Queuine tRNA-ribosyltransferase (373 aa).

Aspartate 90 serves as the catalytic Proton acceptor. Substrate is bound by residues 90–94 (DSGGF), aspartate 144, glutamine 193, and glycine 220. The segment at 251–257 (GVGTPED) is RNA binding. The active-site Nucleophile is aspartate 270. An RNA binding; important for wobble base 34 recognition region spans residues 275-279 (TRNAR). Zn(2+)-binding residues include cysteine 308, cysteine 310, cysteine 313, and histidine 339.

The protein belongs to the queuine tRNA-ribosyltransferase family. In terms of assembly, homodimer. Within each dimer, one monomer is responsible for RNA recognition and catalysis, while the other monomer binds to the replacement base PreQ1. The cofactor is Zn(2+).

The enzyme catalyses 7-aminomethyl-7-carbaguanine + guanosine(34) in tRNA = 7-aminomethyl-7-carbaguanosine(34) in tRNA + guanine. It participates in tRNA modification; tRNA-queuosine biosynthesis. In terms of biological role, catalyzes the base-exchange of a guanine (G) residue with the queuine precursor 7-aminomethyl-7-deazaguanine (PreQ1) at position 34 (anticodon wobble position) in tRNAs with GU(N) anticodons (tRNA-Asp, -Asn, -His and -Tyr). Catalysis occurs through a double-displacement mechanism. The nucleophile active site attacks the C1' of nucleotide 34 to detach the guanine base from the RNA, forming a covalent enzyme-RNA intermediate. The proton acceptor active site deprotonates the incoming PreQ1, allowing a nucleophilic attack on the C1' of the ribose to form the product. After dissociation, two additional enzymatic reactions on the tRNA convert PreQ1 to queuine (Q), resulting in the hypermodified nucleoside queuosine (7-(((4,5-cis-dihydroxy-2-cyclopenten-1-yl)amino)methyl)-7-deazaguanosine). The sequence is that of Queuine tRNA-ribosyltransferase from Campylobacter jejuni (strain RM1221).